The chain runs to 177 residues: MSHSRRAAPTQDQCHTPGFPTSRETSGSIWQARICGSLQALDTWRTHIPRKSPAPTQASQICLLLPESPWRNPTPRGFLKPLINWDAILYFKEKRNIQVTTQAHPQNQASCSSQEVATPGLVPQAAAPKVYERSHDNLNAEAQGLAGAQVSKPQNPITRLCSLKEQSILKIFTKQSI.

The tract at residues 1 to 27 (MSHSRRAAPTQDQCHTPGFPTSRETSG) is disordered.

This is an uncharacterized protein from Homo sapiens (Human).